A 352-amino-acid chain; its full sequence is Mitochondrial hydrolase YKR070W (352 aa).

The protein belongs to the HAD-like hydrolase superfamily.

The protein localises to the mitochondrion. In Saccharomyces cerevisiae (strain ATCC 204508 / S288c) (Baker's yeast), this protein is Mitochondrial hydrolase YKR070W.